A 417-amino-acid polypeptide reads, in one-letter code: Histidine--tRNA ligase (417 aa).

Belongs to the class-II aminoacyl-tRNA synthetase family. In terms of assembly, homodimer.

Its subcellular location is the cytoplasm. The enzyme catalyses tRNA(His) + L-histidine + ATP = L-histidyl-tRNA(His) + AMP + diphosphate + H(+). The chain is Histidine--tRNA ligase from Acetivibrio thermocellus (strain ATCC 27405 / DSM 1237 / JCM 9322 / NBRC 103400 / NCIMB 10682 / NRRL B-4536 / VPI 7372) (Clostridium thermocellum).